Reading from the N-terminus, the 1149-residue chain is Structural maintenance of chromosomes protein 6 homolog smc-6 (1149 aa).

Residue 77-84 participates in ATP binding; the sequence is GPNGSGKS. The stretch at 309–460 forms a coiled coil; that stretch reads LQDETKKEYA…EEEKYTIQRD (152 aa). The interval 461–687 is flexible hinge; it reads INQLRRKIEQ…DVDEGALARL (227 aa). Residues 714–920 adopt a coiled-coil conformation; the sequence is YNERDQTKAA…AVDRATVGCD (207 aa). Disordered stretches follow at residues 875-900 and 1026-1060; these read NDKKNHPMPPGETDPPDLSSFPSTTE and EVDEHSYDDDSDDSTGPRRKKSKKSGQKKKRVRDL. Acidic residues predominate over residues 1026–1038; sequence EVDEHSYDDDSDD. Over residues 1042 to 1058 the composition is skewed to basic residues; that stretch reads PRRKKSKKSGQKKKRVR.

The protein belongs to the SMC family. SMC6 subfamily. As to quaternary structure, interacts with smc-5. In terms of tissue distribution, expressed in the germline (at protein level).

The protein resides in the nucleus. It is found in the chromosome. Functionally, core component of the smc-5/smc-6 complex. Involved in DNA double-strand break repair by promoting sister-chromatid homologous recombination during meiosis. Also plays a role in the DNA damage repair of ultraviolet (UV) radiation-induced DNA lesions. Promotes efficient DNA replication. The chain is Structural maintenance of chromosomes protein 6 homolog smc-6 from Caenorhabditis elegans.